The chain runs to 595 residues: DNA ligase (595 aa).

Residues 32-36 (DEKYD), 81-82 (SL), and Glu-113 each bind NAD(+). The active-site N6-AMP-lysine intermediate is Lys-115. NAD(+)-binding residues include Arg-136, Glu-178, Lys-296, and Lys-320. Residues Cys-414, Cys-417, Cys-432, and Cys-438 each contribute to the Zn(2+) site.

It belongs to the NAD-dependent DNA ligase family. LigA subfamily. Mg(2+) is required as a cofactor. The cofactor is Mn(2+).

The enzyme catalyses NAD(+) + (deoxyribonucleotide)n-3'-hydroxyl + 5'-phospho-(deoxyribonucleotide)m = (deoxyribonucleotide)n+m + AMP + beta-nicotinamide D-nucleotide.. Its function is as follows. DNA ligase that catalyzes the formation of phosphodiester linkages between 5'-phosphoryl and 3'-hydroxyl groups in double-stranded DNA using NAD as a coenzyme and as the energy source for the reaction. It is essential for DNA replication and repair of damaged DNA. The chain is DNA ligase from Blochmanniella pennsylvanica (strain BPEN).